The following is a 1203-amino-acid chain: Regulator of telomere elongation helicase 1 (1203 aa).

The region spanning 7-296 (NGVTVDFPFQ…ARVTQQGELQ (290 aa)) is the Helicase ATP-binding domain. 42–49 (SPTGTGKT) is an ATP binding site. [4Fe-4S] cluster is bound by residues cysteine 145, cysteine 163, cysteine 172, and cysteine 207. The short motif at 151–167 (KKQESNHMQISLCRKKV) is the Nuclear localization signal element. Positions 250–253 (DEAH) match the DEAH box motif. Positions 871-877 (QKGGRKK) match the Nuclear localization signal motif. Disordered regions lie at residues 998–1020 (QLDP…TSKG) and 1120–1203 (TTGK…RSKQ). Polar residues predominate over residues 1004–1020 (HLNQGQPHLSAHPTSKG). Basic and acidic residues predominate over residues 1123–1134 (KDLELEGPRDES). The PIP-box motif lies at 1160–1167 (QSKISSFF). Residues 1169-1181 (QRPDESVRSDDTT) show a composition bias toward basic and acidic residues.

Belongs to the helicase family. RAD3/XPD subfamily. In terms of assembly, interacts with TERF1. Interacts (via PIP-box) with PCNA; the interaction is direct and essential for suppressing telomere fragility. Interacts with MMS19; the interaction mediates the association of RTEL1 with the cytosolic iron-sulfur protein assembly (CIA) complex. Widely expressed. Expressed in spleen, thymus, Peyer patches, kidney, and intestine. Not expressed in brain, heart, lung, skeletal muscles, skin and white fat. In the adult gonad, it is highly expressed in the testis, mainly in the spermatogonia and meiotic spermatocytes.

The protein localises to the nucleus. It catalyses the reaction ATP + H2O = ADP + phosphate + H(+). A probable ATP-dependent DNA helicase implicated in telomere-length regulation, DNA repair and the maintenance of genomic stability. Acts as an anti-recombinase to counteract toxic recombination and limit crossover during meiosis. Regulates meiotic recombination and crossover homeostasis by physically dissociating strand invasion events and thereby promotes noncrossover repair by meiotic synthesis dependent strand annealing (SDSA) as well as disassembly of D loop recombination intermediates. Also disassembles T loops and prevents telomere fragility by counteracting telomeric G4-DNA structures, which together ensure the dynamics and stability of the telomere. In Mus musculus (Mouse), this protein is Regulator of telomere elongation helicase 1.